The following is a 486-amino-acid chain: L-carnitine:corrinoid methyltransferase (486 aa).

The protein belongs to the trimethylamine methyltransferase family. The L-carnitine:THF methyl transfer system is composed of two methyltransferases, MtcB and MtqA, and the corrinoid protein MtqC.

It carries out the reaction Co(I)-[quaternary-amine-specific corrinoid protein] + (R)-carnitine + H(+) = (3R)-4-(dimethylamino)-3-hydroxybutanoate + methyl-Co(III)-[quaternary-amine-specific corrinoid protein]. Functionally, involved in the degradation of the quaternary amine L-carnitine. Component of a corrinoid-dependent methyltransferase system that transfers a methyl group from L-carnitine to tetrahydrofolate (THF), forming methyl-THF, a key intermediate in the Wood-Ljungdahl acetogenesis pathway. MtcB catalyzes the methylation of the corrinoid protein MtqC, using L-carnitine as the methyl donor. L-carnitine demethylation generates the unusual biological product norcarnitine, which is likely degraded by other members of the gut microbiota. In vitro, can methylate free cob(I)alamin. The protein is L-carnitine:corrinoid methyltransferase of Eubacterium limosum.